The chain runs to 147 residues: Austinoid biosynthesis cluster protein H (147 aa).

This sequence belongs to the trt14 isomerase family. Homodimer.

It participates in secondary metabolite biosynthesis; terpenoid biosynthesis. In terms of biological role, part of the gene cluster that mediates the biosynthesis of calidodehydroaustin, a fungal meroterpenoid. The first step of the pathway is the synthesis of 3,5-dimethylorsellinic acid by the polyketide synthase ausA. 3,5-dimethylorsellinic acid is then prenylated by the polyprenyl transferase ausN. Further epoxidation by the FAD-dependent monooxygenase ausM and cyclization by the probable terpene cyclase ausL lead to the formation of protoaustinoid A. Protoaustinoid A is then oxidized to spiro-lactone preaustinoid A3 by the combined action of the FAD-binding monooxygenases ausB and ausC, and the dioxygenase ausE. Acid-catalyzed keto-rearrangement and ring contraction of the tetraketide portion of preaustinoid A3 by ausJ lead to the formation of preaustinoid A4. The aldo-keto reductase ausK, with the help of ausH, is involved in the next step by transforming preaustinoid A4 into isoaustinone which is in turn hydroxylated by the P450 monooxygenase ausI to form austinolide. The cytochrome P450 monooxygenase ausG modifies austinolide to austinol. Austinol is further acetylated to austin by the O-acetyltransferase ausP, which spontaneously changes to dehydroaustin. The cytochrome P450 monooxygenase ausR then converts dehydroaustin is into 7-dehydrodehydroaustin. The hydroxylation catalyzed by ausR permits the O-acetyltransferase ausQ to add an additional acetyl group to the molecule, leading to the formation of acetoxydehydroaustin. The short chain dehydrogenase ausT catalyzes the reduction of the double bond present between carbon atoms 1 and 2 to convert 7-dehydrodehydroaustin into 1,2-dihydro-7-hydroxydehydroaustin. AusQ catalyzes not only an acetylation reaction but also the addition of the PKS ausV diketide product to 1,2-dihydro-7-hydroxydehydroaustin, forming precalidodehydroaustin. Finally, the iron/alpha-ketoglutarate-dependent dioxygenase converts precalidodehydroaustin into calidodehydroaustin. This chain is Austinoid biosynthesis cluster protein H, found in Aspergillus calidoustus.